The sequence spans 677 residues: Levanase (677 aa).

Positions 1–24 (MKKRLIQVMIMFTLLLTMAFSADA) are cleaved as a signal peptide. Substrate contacts are provided by residues 46–49 (WMND), Q65, W73, 105–106 (FS), 171–172 (RD), E223, and W313. Residue D49 is part of the active site.

It belongs to the glycosyl hydrolase 32 family.

It is found in the secreted. The enzyme catalyses Hydrolysis of terminal, non-reducing (2-&gt;1)- and (2-&gt;6)-linked beta-D-fructofuranose residues in fructans.. Is completely inhibited by Ag(+) and Hg(2+) ions. Its function is as follows. Exo-fructosidase that can hydrolyze both levan and inulin, leading to the production of free fructose. Is also able to hydrolyze sucrose and to a small extent raffinose, but not melezitose, stachylose, cellobiose, maltose, and lactose. This Bacillus subtilis (strain 168) protein is Levanase (sacC).